A 303-amino-acid chain; its full sequence is 1D-myo-inositol 2-acetamido-2-deoxy-alpha-D-glucopyranoside deacetylase 1 (303 aa).

Zn(2+)-binding residues include His-15, Asp-18, and His-157.

It belongs to the MshB deacetylase family. The cofactor is Zn(2+).

The catalysed reaction is 1D-myo-inositol 2-acetamido-2-deoxy-alpha-D-glucopyranoside + H2O = 1D-myo-inositol 2-amino-2-deoxy-alpha-D-glucopyranoside + acetate. Functionally, catalyzes the deacetylation of 1D-myo-inositol 2-acetamido-2-deoxy-alpha-D-glucopyranoside (GlcNAc-Ins) in the mycothiol biosynthesis pathway. The protein is 1D-myo-inositol 2-acetamido-2-deoxy-alpha-D-glucopyranoside deacetylase 1 of Saccharopolyspora erythraea (strain ATCC 11635 / DSM 40517 / JCM 4748 / NBRC 13426 / NCIMB 8594 / NRRL 2338).